The chain runs to 570 residues: Sulfite reductase [NADPH] hemoprotein beta-component (570 aa).

[4Fe-4S] cluster contacts are provided by Cys-434, Cys-440, Cys-479, and Cys-483. Residue Cys-483 participates in siroheme binding.

This sequence belongs to the nitrite and sulfite reductase 4Fe-4S domain family. Alpha(8)-beta(8). The alpha component is a flavoprotein, the beta component is a hemoprotein. The cofactor is siroheme. [4Fe-4S] cluster is required as a cofactor.

It catalyses the reaction hydrogen sulfide + 3 NADP(+) + 3 H2O = sulfite + 3 NADPH + 4 H(+). It functions in the pathway sulfur metabolism; hydrogen sulfide biosynthesis; hydrogen sulfide from sulfite (NADPH route): step 1/1. In terms of biological role, component of the sulfite reductase complex that catalyzes the 6-electron reduction of sulfite to sulfide. This is one of several activities required for the biosynthesis of L-cysteine from sulfate. This is Sulfite reductase [NADPH] hemoprotein beta-component from Escherichia fergusonii (strain ATCC 35469 / DSM 13698 / CCUG 18766 / IAM 14443 / JCM 21226 / LMG 7866 / NBRC 102419 / NCTC 12128 / CDC 0568-73).